Reading from the N-terminus, the 405-residue chain is Glucoside xylosyltransferase 1 (405 aa).

At Met-1–Arg-2 the chain is on the cytoplasmic side. Residues Ile-3–Phe-23 form a helical; Signal-anchor for type II membrane protein membrane-spanning segment. Residues Ser-24–Asp-405 lie on the Lumenal side of the membrane. Positions Ser-46–Val-65 are disordered. N-linked (GlcNAc...) asparagine glycans are attached at residues Asn-202, Asn-243, Asn-277, and Asn-372.

It belongs to the glycosyltransferase 8 family.

It localises to the membrane. It catalyses the reaction 3-O-(beta-D-glucosyl)-L-seryl-[EGF-like domain protein] + UDP-alpha-D-xylose = 3-O-[alpha-D-xylosyl-(1-&gt;3)-beta-D-glucosyl]-L-seryl-[EGF-like domain protein] + UDP + H(+). Its function is as follows. Glycosyltransferase which elongates the O-linked glucose attached to EGF-like repeats in the extracellular domain of Notch proteins by catalyzing the addition of xylose. The chain is Glucoside xylosyltransferase 1 (gxylt1) from Danio rerio (Zebrafish).